The primary structure comprises 1313 residues: Ataxin-2 (1313 aa).

A compositionally biased stretch (low complexity) spans 1-12; sequence MRSAAAAPRSPA. The tract at residues 1–255 is disordered; that stretch reads MRSAAAAPRS…RNSNKGLPQS (255 aa). Positions 48–65 are enriched in pro residues; it reads GPYPSAAPPPPGPGPPPS. Low complexity-rich tracts occupy residues 104–114, 141–154, 166–187, and 204–234; these read FVVLLLPLASP, ARPAPGCPRPACEP, QQQQQQQQQQQQQQQQQQQQQQ, and LLASPAAAPSPSSSSVSSSSATAPSSVVAAT. Gly residues predominate over residues 235–244; the sequence is SGGGRPGLGR. S248 is subject to Phosphoserine. The region spanning 267 to 344 is the Sm domain; sequence RMVHILTSVV…FVVVQFKDMD (78 aa). S393, S466, S478, S508, and S554 each carry phosphoserine. 2 stretches are compositionally biased toward basic and acidic residues: residues 459-471 and 478-492; these read ALENDDRSEEEKY and SSEREGHSINTRENK. Disordered regions lie at residues 459–954 and 1137–1219; these read ALEN…HQQP and NATL…NSFP. Residues 508-544 are compositionally biased toward polar residues; sequence SGRQNSPRMGQPGSGSMPSRSTSHTSDFNPNSGSDQR. Residues 552-562 are compositionally biased toward pro residues; sequence WPSPCPSPSSR. A compositionally biased stretch (low complexity) spans 563-581; the sequence is PPSRYQSGPNSLPPRAATP. Residues 582–598 show a composition bias toward pro residues; that stretch reads TRPPSRPPSRPSRPPSH. Residue S624 is modified to Phosphoserine. A compositionally biased stretch (basic residues) spans 627 to 637; that stretch reads AQRHPRNHRVS. R640 bears the Asymmetric dimethylarginine; alternate mark. R640 carries the post-translational modification Omega-N-methylarginine; alternate. A Phosphoserine modification is found at S642. Low complexity predominate over residues 666–681; that stretch reads TSPSGGTWSSVVSGVP. Position 684 is a phosphoserine (S684). The segment covering 693-703 has biased composition (polar residues); it reads PRQNSIGNTPS. At S728 the chain carries Phosphoserine. T741 carries the phosphothreonine modification. The segment covering 768–777 has biased composition (polar residues); that stretch reads PNETSPSFSK. Residues S772 and S784 each carry the phosphoserine modification. Basic and acidic residues predominate over residues 788-804; it reads SEHRKQIDDLKKFKNDF. Positions 807–820 are enriched in polar residues; it reads QPSSTSESMDQLLN. Basic and acidic residues predominate over residues 821–844; sequence KNREGEKSRDLIKDKIEPSAKDSF. Over residues 847 to 871 the composition is skewed to low complexity; it reads NSSSNCTSGSSKPNSPSISPSILSN. S856, S857, S861, S865, S867, S888, and S889 each carry phosphoserine. A compositionally biased stretch (polar residues) spans 880-891; sequence VTSQGVQTSSPA. K893 is covalently cross-linked (Glycyl lysine isopeptide (Lys-Gly) (interchain with G-Cter in SUMO2)). Positions 893 to 910 are enriched in basic and acidic residues; that stretch reads KQEKDDKEEKKDAAEQVR. 2 stretches are compositionally biased toward low complexity: residues 925-936 and 1155-1192; these read SFSQPKPSTTPT and GQQQSQHGGSHPAPSPVQHHQHQAAQALHLASPQQQSA. Residues 1206–1219 show a composition bias toward polar residues; sequence TPASNTQSPQNSFP.

Belongs to the ataxin-2 family. In terms of assembly, monomer. Can also form homodimers. Interacts with TARDBP; the interaction is RNA-dependent. Interacts with RBFOX1. Interacts with polyribosomes. Interacts with SH3GL2 and SH3GL3. Interacts with SH3KBP1 and CBL. Interacts with EGFR. Interacts with ATXN2L. Expressed in the brain, heart, liver, skeletal muscle, pancreas and placenta. Isoform 1 is predominant in the brain and spinal cord. Isoform 4 is more abundant in the cerebellum. In the brain, broadly expressed in the amygdala, caudate nucleus, corpus callosum, hippocampus, hypothalamus, substantia nigra, subthalamic nucleus and thalamus.

The protein resides in the cytoplasm. Involved in EGFR trafficking, acting as negative regulator of endocytic EGFR internalization at the plasma membrane. The polypeptide is Ataxin-2 (ATXN2) (Homo sapiens (Human)).